A 306-amino-acid chain; its full sequence is UDP-3-O-acyl-N-acetylglucosamine deacetylase (306 aa).

3 residues coordinate Zn(2+): histidine 79, histidine 239, and aspartate 243. The Proton donor role is filled by histidine 266.

This sequence belongs to the LpxC family. The cofactor is Zn(2+).

The enzyme catalyses a UDP-3-O-[(3R)-3-hydroxyacyl]-N-acetyl-alpha-D-glucosamine + H2O = a UDP-3-O-[(3R)-3-hydroxyacyl]-alpha-D-glucosamine + acetate. It participates in glycolipid biosynthesis; lipid IV(A) biosynthesis; lipid IV(A) from (3R)-3-hydroxytetradecanoyl-[acyl-carrier-protein] and UDP-N-acetyl-alpha-D-glucosamine: step 2/6. Catalyzes the hydrolysis of UDP-3-O-myristoyl-N-acetylglucosamine to form UDP-3-O-myristoylglucosamine and acetate, the committed step in lipid A biosynthesis. The chain is UDP-3-O-acyl-N-acetylglucosamine deacetylase from Haemophilus ducreyi (strain 35000HP / ATCC 700724).